We begin with the raw amino-acid sequence, 448 residues long: Binary larvicide subunit BinB (448 aa).

The tract at residues 19–200 (TNYPLNTTPT…FVNSSFYAAA (182 aa)) is beta-trefoil domain. Cysteines 67 and 161 form a disulfide. The interval 226-407 (PKDAVRAVKG…APITNPLTLT (182 aa)) is probable pore-forming domain.

It belongs to the toxin_10 family. In terms of assembly, forms a heterodimer with BinA. Post-translationally, processed by proteases extracted from mosquito larval gut.

It localises to the spore. Its subcellular location is the perispore. Its function is as follows. Component of a binary toxin active against Culex and some Aedes mosquito larvae. This subunit is responsible for localized binding to specific regions of the host larval gut. The individual subunits are not toxic. BinAB and this subunit alone bind to the gastric caecum and posterior midgut of C.quinquefasciatus larvae. Binary toxin internalization into host gut cells requires both proteins. Does not bind to the midgut of Aedes aegypti. Toxic to Aedes atropalpus mosquito larvae; mortality towards both C.quinquefasciatus and A.atropalpus is maximal by 48 hours. A.aegypti is not very susceptible to this toxin. Binding component of binary toxin. The 51 kDa polypeptide acts synergetically with the 42 kDa polypeptide for expression of a larvicidal toxin. The protein is Binary larvicide subunit BinB of Lysinibacillus sphaericus (Bacillus sphaericus).